We begin with the raw amino-acid sequence, 529 residues long: MSVKWTSIILLIQLSFYFSSGSCGKVLVWAAEYSHWMNMKTILEELVQRGHEVTVLASSASILFDPNNSSALKIEVFPTSLTKTEFENIIRQQIKRWSELPKDTFWLYFSQIQEIMWRFGDISIKFCKDVVSNKKLMKKLQESRFDVVLADPIFPCSELLAELFNIPLVYSLRFTPGYVFEKHCGGFLFPPSYVPVVMSELSDQMTFMERVKNMIYVLYFDFCFQLYDMKKWDQFYSEVLGRHTTLSEIMGKADIWLIRNSWNFQFPHPLLPNVDFIGGLLCKPAKPLPKEMEEFVQSSGENGVVVFTLGSMITNMKEERANVIASALAQIPQKVLWRFDGNKPDTLGVNTRLYKWIPQNDLLGHPKTKAFITHGGANGIYEAIYHGVPMVGIPLFADQPDNIAHMKTRGAAVQLDFDTMSSTDLANALKTVINDPLYKENVMKLSRIQRDQPVKPLDRAVFWIEFVMRHKGAKHLRPAAHDLTWFQYHSLDVIGFLLACVATVIFIIMKCCLFCFWKFTRKGKKGKSD.

Residues 1 to 24 (MSVKWTSIILLIQLSFYFSSGSCG) form the signal peptide. N-linked (GlcNAc...) asparagine glycans are attached at residues Asn67 and Asn68. Residues 494-514 (IGFLLACVATVIFIIMKCCLF) traverse the membrane as a helical segment.

Belongs to the UDP-glycosyltransferase family.

It localises to the microsome membrane. The protein resides in the endoplasmic reticulum membrane. The enzyme catalyses glucuronate acceptor + UDP-alpha-D-glucuronate = acceptor beta-D-glucuronoside + UDP + H(+). Functionally, UDPGTs are of major importance in the conjugation and subsequent elimination of potentially toxic xenobiotics and endogenous compounds. This isozyme has glucuronidating capacity on estriol and does not catalyze the glucuronidation of beta-estradiol. Capable of conjugating 4-hydroxyestrone, androsterone, diclofenac, and hyodeoxycholic acid. The protein is UDP-glucuronosyltransferase 2B33 (UGT2B33) of Macaca mulatta (Rhesus macaque).